The following is a 154-amino-acid chain: MTHPLIPEILDLAVPLAADLNLEVVGAVFHTHLNPPVLRVDIRNLSADTSLEDCERMSHRLETALDAADLVAGTYVLEVSSPGISRLLSSDREFVSFRGFSVIVRTREPIAGQREWVGNLVQRDEEFVYLNQKGRAISIPRHLVTQVQLNEKRS.

The protein belongs to the RimP family.

It localises to the cytoplasm. In terms of biological role, required for maturation of 30S ribosomal subunits. This Cyanothece sp. (strain PCC 7425 / ATCC 29141) protein is Ribosome maturation factor RimP.